Consider the following 440-residue polypeptide: Probable carboxypeptidase AFUB_072730 (440 aa).

An N-terminal signal peptide occupies residues 1–16; it reads MKPLTSLLLSAALSAA. 2 N-linked (GlcNAc...) asparagine glycosylation sites follow: N87 and N149. Residue D165 coordinates Zn(2+). E197 (proton acceptor) is an active-site residue. E198 contacts Zn(2+). N-linked (GlcNAc...) asparagine glycosylation is found at N353 and N372.

This sequence belongs to the peptidase M20A family. The cofactor is Zn(2+).

Its subcellular location is the secreted. This Aspergillus fumigatus (strain CBS 144.89 / FGSC A1163 / CEA10) (Neosartorya fumigata) protein is Probable carboxypeptidase AFUB_072730.